The chain runs to 162 residues: Nucleotide-binding protein CMM_2802 (162 aa).

The protein belongs to the YajQ family.

Its function is as follows. Nucleotide-binding protein. The sequence is that of Nucleotide-binding protein CMM_2802 from Clavibacter michiganensis subsp. michiganensis (strain NCPPB 382).